A 171-amino-acid chain; its full sequence is Alpha-amylase/trypsin inhibitor CMd (171 aa).

The first 24 residues, 1 to 24 (MACKSSRSLLLLATVMVSVFAAAA), serve as a signal peptide directing secretion.

This sequence belongs to the protease inhibitor I6 (cereal trypsin/alpha-amylase inhibitor) family. As to quaternary structure, heterotetramer of one CMa, one CMb and two CMd chains. Five disulfide bonds, which are essential for the inhibitor activity, are probably present. Endosperm.

The protein localises to the secreted. Its function is as follows. Part of a complex with inhibitory activity, but CMd is inactive as a separate subunit. In Hordeum vulgare (Barley), this protein is Alpha-amylase/trypsin inhibitor CMd (IAT3).